A 254-amino-acid chain; its full sequence is uncharacterized protein (254 aa).

This is an uncharacterized protein from Escherichia coli (strain K12).